The chain runs to 154 residues: 6,7-dimethyl-8-ribityllumazine synthase (154 aa).

5-amino-6-(D-ribitylamino)uracil-binding positions include F22, 56–58, and 80–82; these read AFE and TVI. Residue 85-86 coordinates (2S)-2-hydroxy-3-oxobutyl phosphate; the sequence is AT. H88 serves as the catalytic Proton donor. Position 113 (F113) interacts with 5-amino-6-(D-ribitylamino)uracil. R127 contributes to the (2S)-2-hydroxy-3-oxobutyl phosphate binding site.

It belongs to the DMRL synthase family. Forms an icosahedral capsid composed of 60 subunits, arranged as a dodecamer of pentamers.

It carries out the reaction (2S)-2-hydroxy-3-oxobutyl phosphate + 5-amino-6-(D-ribitylamino)uracil = 6,7-dimethyl-8-(1-D-ribityl)lumazine + phosphate + 2 H2O + H(+). Its pathway is cofactor biosynthesis; riboflavin biosynthesis; riboflavin from 2-hydroxy-3-oxobutyl phosphate and 5-amino-6-(D-ribitylamino)uracil: step 1/2. Catalyzes the formation of 6,7-dimethyl-8-ribityllumazine by condensation of 5-amino-6-(D-ribitylamino)uracil with 3,4-dihydroxy-2-butanone 4-phosphate. This is the penultimate step in the biosynthesis of riboflavin. This is 6,7-dimethyl-8-ribityllumazine synthase from Bacillus pumilus (strain SAFR-032).